The chain runs to 289 residues: Transcriptional regulator Rob (289 aa).

Positions 8-106 constitute an HTH araC/xylS-type domain; sequence RDLLIWLEGH…SQTPALYRRS (99 aa). 2 DNA-binding regions (H-T-H motif) span residues 25 to 46 and 73 to 96; these read DNVA…KDVT and ILDI…KKQF.

Its function is as follows. Transcriptional regulator. Represses transcription of genes belonging to the flagellar regulon, including flhD, flhB and fliC; probably thereby leading to repression of motility. Binds to regulatory regions of target genes, including the promoters of the flhDC operon and of P-type ATPase mgtA. Involved in post-transcriptional regulation of expression. Represses expression of the flhDC operon in a post-transcriptional manner. Binds to the right arm of the replication origin oriC of the chromosome. Rob binding may influence the formation of the nucleoprotein structure, required for oriC function in the initiation of replication. This chain is Transcriptional regulator Rob, found in Salmonella typhimurium (strain LT2 / SGSC1412 / ATCC 700720).